We begin with the raw amino-acid sequence, 196 residues long: MLLLLKKIYLTFARSSRIIITLVIIDQLSKWWFIDNLRWKPGLMLKVTAFLNMVYTWNYGISFGLMREYYQYSNAVFILTNSIIVCYLYYLMVCSKTIRGFAGYSFVIGGAVGNLIDRLFRGAVFDFIHFYYKNYSFPVFNLADCFITIGVIILIEDYYSTKKIIEEKAKEHYDNAQIKAMAEKIRNTDHNGDNKI.

3 consecutive transmembrane segments (helical) span residues 43 to 63 (LMLK…GISF), 75 to 95 (AVFI…MVCS), and 100 to 120 (GFAG…DRLF). Residues Asp126 and Asp144 contribute to the active site. A helical membrane pass occupies residues 135-155 (YSFPVFNLADCFITIGVIILI).

Belongs to the peptidase A8 family.

The protein resides in the cell inner membrane. The enzyme catalyses Release of signal peptides from bacterial membrane prolipoproteins. Hydrolyzes -Xaa-Yaa-Zaa-|-(S,diacylglyceryl)Cys-, in which Xaa is hydrophobic (preferably Leu), and Yaa (Ala or Ser) and Zaa (Gly or Ala) have small, neutral side chains.. The protein operates within protein modification; lipoprotein biosynthesis (signal peptide cleavage). Its function is as follows. This protein specifically catalyzes the removal of signal peptides from prolipoproteins. The protein is Lipoprotein signal peptidase of Rickettsia canadensis (strain McKiel).